The chain runs to 147 residues: Large ribosomal subunit protein uL16 (147 aa).

The disordered stretch occupies residues 1–20; that stretch reads MLMPKKVKHRKVQRGRMKGK.

Belongs to the universal ribosomal protein uL16 family. In terms of assembly, part of the 50S ribosomal subunit.

Functionally, binds 23S rRNA and is also seen to make contacts with the A and possibly P site tRNAs. In Clostridium kluyveri (strain ATCC 8527 / DSM 555 / NBRC 12016 / NCIMB 10680 / K1), this protein is Large ribosomal subunit protein uL16.